Reading from the N-terminus, the 246-residue chain is Large ribosomal subunit protein uL2 (246 aa).

Positions 197–227 are disordered; sequence SPYAHPHGGGSHQKGGTPVPKTAPPGQKVGF.

This sequence belongs to the universal ribosomal protein uL2 family. Part of the 50S ribosomal subunit. Forms a bridge to the 30S subunit in the 70S ribosome.

In terms of biological role, one of the primary rRNA binding proteins. Required for association of the 30S and 50S subunits to form the 70S ribosome, for tRNA binding and peptide bond formation. It has been suggested to have peptidyltransferase activity; this is somewhat controversial. Makes several contacts with the 16S rRNA in the 70S ribosome. The sequence is that of Large ribosomal subunit protein uL2 from Pyrobaculum aerophilum (strain ATCC 51768 / DSM 7523 / JCM 9630 / CIP 104966 / NBRC 100827 / IM2).